The primary structure comprises 794 residues: Copper amine oxidase-like protein cao2 (794 aa).

Residues 307 to 318 (AYDLGEYGVGYR) and 391 to 396 (AANYEY) contribute to the substrate site. The active-site Proton acceptor is the Asp-309. The active-site Schiff-base intermediate with substrate; via topaquinone is Tyr-394. A 2',4',5'-topaquinone modification is found at Tyr-394. 2 residues coordinate Cu cation: His-445 and His-447. Residues 563 to 584 (GDYAPQASDDTPKGLSKWISDD) are disordered. Positions 593 and 594 each coordinate Mn(2+). His-604 lines the Cu cation pocket. The disordered stretch occupies residues 634-748 (ALDTSSSVNS…NGGHHHHHHH (115 aa)). Residues 637-649 (TSSSVNSTSEATS) are compositionally biased toward low complexity. The span at 652-714 (THHENLRDTS…DAAQKHEGRS (63 aa)) shows a compositional bias: basic and acidic residues. The span at 716–727 (TLAQPGQQNANQ) shows a compositional bias: polar residues.

This sequence belongs to the copper/topaquinone oxidase family. Homodimer. Cu cation is required as a cofactor. Requires Zn(2+) as cofactor. It depends on L-topaquinone as a cofactor. Mn(2+) serves as cofactor. Topaquinone (TPQ) is generated by copper-dependent autoxidation of a specific tyrosyl residue.

The protein localises to the cytoplasm. The enzyme catalyses a primary methyl amine + O2 + H2O = an aldehyde + H2O2 + NH4(+). Copper amine oxidase-like protein that does not show any copper amine oxidase activity. May be the appropriate amine substrate for cao2 has not been identified yet. The sequence is that of Copper amine oxidase-like protein cao2 (cao2) from Schizosaccharomyces pombe (strain 972 / ATCC 24843) (Fission yeast).